We begin with the raw amino-acid sequence, 386 residues long: MASSSSSSLSFSTSKKNKTFFKKPNSAFSSSRATSLIKRQQTVFKKAKELSILCDIDVCVICYGSNGELKTWPEEREKVKAIARRYGELSETKRRKGSVDLHEFLEKMNKDDPEKEEKKKIKVRRVPKVKYPVWDPRFDNYSVEQLMGLVQSLERNLTRIQHRTCAVVEAQGQRRVQYTNMANQELMMANTMNQLQQHSNQVSMYLWNHGNGAFSQIPVSALASNQTQSLAPIPPELMIYPNSDAGNYSGSLGVQGTGINGLQNMNMLTYNNINSVNDFSKQFDQNSRAESYSSLLGVHEDGNNEFENPNMSSRNNFNVQDCAGLLGMQGAGTNGLQSMNMHDYSNNNSINSNGLSHQYVQFPTYNSQHQDRVFNLDQNGNNTRSL.

Residues 29–76 (SSSRATSLIKRQQTVFKKAKELSILCDIDVCVICYGSNGELKTWPEER) form the MADS-box domain.

Interacts with MEE14/CBP1.

It is found in the nucleus. Its function is as follows. Probable transcription factor that may function in the maintenance of the proper function of the central cell in pollen tube attraction. This Arabidopsis thaliana (Mouse-ear cress) protein is Agamous-like MADS-box protein AGL103.